The following is a 110-amino-acid chain: NAD(P)H-quinone oxidoreductase subunit M (110 aa).

It belongs to the complex I NdhM subunit family. NDH-1 can be composed of about 15 different subunits; different subcomplexes with different compositions have been identified which probably have different functions.

It is found in the cellular thylakoid membrane. The enzyme catalyses a plastoquinone + NADH + (n+1) H(+)(in) = a plastoquinol + NAD(+) + n H(+)(out). The catalysed reaction is a plastoquinone + NADPH + (n+1) H(+)(in) = a plastoquinol + NADP(+) + n H(+)(out). Functionally, NDH-1 shuttles electrons from an unknown electron donor, via FMN and iron-sulfur (Fe-S) centers, to quinones in the respiratory and/or the photosynthetic chain. The immediate electron acceptor for the enzyme in this species is believed to be plastoquinone. Couples the redox reaction to proton translocation, and thus conserves the redox energy in a proton gradient. Cyanobacterial NDH-1 also plays a role in inorganic carbon-concentration. This chain is NAD(P)H-quinone oxidoreductase subunit M, found in Synechococcus elongatus (strain ATCC 33912 / PCC 7942 / FACHB-805) (Anacystis nidulans R2).